The chain runs to 137 residues: Small ribosomal subunit protein uS9 (137 aa).

Belongs to the universal ribosomal protein uS9 family.

In Picosynechococcus sp. (strain ATCC 27264 / PCC 7002 / PR-6) (Agmenellum quadruplicatum), this protein is Small ribosomal subunit protein uS9.